The following is a 144-amino-acid chain: NADPH-dependent 7-cyano-7-deazaguanine reductase (144 aa).

Positions methionine 1–threonine 21 are enriched in polar residues. Positions methionine 1–glycine 27 are disordered. The active-site Thioimide intermediate is the cysteine 61. Catalysis depends on aspartate 68, which acts as the Proton donor. Substrate is bound by residues valine 83 to leucine 85 and histidine 102 to glutamate 103.

This sequence belongs to the GTP cyclohydrolase I family. QueF type 1 subfamily.

It is found in the cytoplasm. It carries out the reaction 7-aminomethyl-7-carbaguanine + 2 NADP(+) = 7-cyano-7-deazaguanine + 2 NADPH + 3 H(+). Its pathway is tRNA modification; tRNA-queuosine biosynthesis. Its function is as follows. Catalyzes the NADPH-dependent reduction of 7-cyano-7-deazaguanine (preQ0) to 7-aminomethyl-7-deazaguanine (preQ1). This is NADPH-dependent 7-cyano-7-deazaguanine reductase from Acaryochloris marina (strain MBIC 11017).